Here is a 514-residue protein sequence, read N- to C-terminus: Peptide chain release factor 3 (514 aa).

A tr-type G domain is found at 8-268 (KKRRTFAIIS…TFLEFAPEPH (261 aa)). GTP is bound by residues 17 to 24 (SHPDAGKT), 85 to 89 (DTPGH), and 139 to 142 (NKLD).

The protein belongs to the TRAFAC class translation factor GTPase superfamily. Classic translation factor GTPase family. PrfC subfamily.

It is found in the cytoplasm. Functionally, increases the formation of ribosomal termination complexes and stimulates activities of RF-1 and RF-2. It binds guanine nucleotides and has strong preference for UGA stop codons. It may interact directly with the ribosome. The stimulation of RF-1 and RF-2 is significantly reduced by GTP and GDP, but not by GMP. The sequence is that of Peptide chain release factor 3 from Streptococcus pyogenes serotype M5 (strain Manfredo).